An 89-amino-acid chain; its full sequence is Small ribosomal subunit protein bS20 (89 aa).

A disordered region spans residues 1-25 (MANTPQSKKRARQLERRTAVNKARR).

Belongs to the bacterial ribosomal protein bS20 family.

Binds directly to 16S ribosomal RNA. The protein is Small ribosomal subunit protein bS20 of Paracoccus denitrificans (strain Pd 1222).